The chain runs to 309 residues: Tagatose-6-phosphate kinase (309 aa).

Belongs to the carbohydrate kinase PfkB family. LacC subfamily.

It carries out the reaction D-tagatofuranose 6-phosphate + ATP = D-tagatofuranose 1,6-bisphosphate + ADP + H(+). The protein operates within carbohydrate metabolism; D-tagatose 6-phosphate degradation; D-glyceraldehyde 3-phosphate and glycerone phosphate from D-tagatose 6-phosphate: step 1/2. This is Tagatose-6-phosphate kinase from Streptococcus pyogenes serotype M18 (strain MGAS8232).